The chain runs to 251 residues: UDP-N-acetylglucosamine--dolichyl-phosphate N-acetylglucosaminyltransferase (251 aa).

Residues 150-167 form a helical membrane-spanning segment; the sequence is VGNLGLSFITFLLGGYYV.

The protein belongs to the glycosyltransferase 2 family.

The protein resides in the cell membrane. It carries out the reaction a di-trans,poly-cis-dolichyl phosphate + UDP-N-acetyl-alpha-D-glucosamine = an N-acetyl-alpha-D-glucosaminyl-phospho-di-trans,poly-cis-dolichol + UDP. It participates in cell surface structure biogenesis; S-layer biogenesis. The protein operates within protein modification; protein glycosylation. Involved in the assembly of an N-linked disaccharide that decorates the S-layer glycoprotein and flagellins. AglK initiates N-linked glycosylation through the formation of alpha-linked dolichyl monophosphate N-acetylglucosamine. It catalyzes the transfer of GlcNAc from the donor substrate UDP-GlcNAc to dolichyl phosphate C55 (Dol-P) to yield Dol-P-GlcNAc. AglK reaction proceeds with retention of stereochemistry. The reaction is specific for UDP-GlcNAc. AglK shows a stronger preference for short dolichol (C55-60 Dol-P) substrates compared with the longer (C85-105 Dol-P). The sequence is that of UDP-N-acetylglucosamine--dolichyl-phosphate N-acetylglucosaminyltransferase from Methanococcus voltae.